We begin with the raw amino-acid sequence, 518 residues long: Putative ribose/galactose/methyl galactoside import ATP-binding protein (518 aa).

Residues 1 to 22 (MSIAVLDRPMSRQDTPSASSVP) form a disordered region. Polar residues predominate over residues 12–22 (RQDTPSASSVP). 2 ABC transporter domains span residues 29-265 (LEVR…VGRE) and 275-515 (VPIG…VMEL). 61 to 68 (GENGAGKS) provides a ligand contact to ATP.

Belongs to the ABC transporter superfamily. Carbohydrate importer 2 (CUT2) (TC 3.A.1.2) family.

It is found in the cell inner membrane. It catalyses the reaction D-ribose(out) + ATP + H2O = D-ribose(in) + ADP + phosphate + H(+). It carries out the reaction D-galactose(out) + ATP + H2O = D-galactose(in) + ADP + phosphate + H(+). In terms of biological role, part of an ABC transporter complex involved in carbohydrate import. Could be involved in ribose, galactose and/or methyl galactoside import. Responsible for energy coupling to the transport system. This is Putative ribose/galactose/methyl galactoside import ATP-binding protein from Ralstonia nicotianae (strain ATCC BAA-1114 / GMI1000) (Ralstonia solanacearum).